The primary structure comprises 115 residues: Succinate dehydrogenase assembly factor 3, mitochondrial (115 aa).

It belongs to the complex I LYR family. SDHAF3 subfamily. In terms of assembly, interacts with sdh2 within an sdh1-sdh2 subcomplex.

It is found in the mitochondrion matrix. Its function is as follows. Plays an essential role in the assembly of succinate dehydrogenase (SDH), an enzyme complex (also referred to as respiratory complex II) that is a component of both the tricarboxylic acid (TCA) cycle and the mitochondrial electron transport chain, and which couples the oxidation of succinate to fumarate with the reduction of ubiquinone (coenzyme Q) to ubiquinol. Promotes maturation of the iron-sulfur protein subunit sdh2 of the SDH catalytic dimer, protecting it from the deleterious effects of oxidants. May act together with SDHAF1. The protein is Succinate dehydrogenase assembly factor 3, mitochondrial of Schizosaccharomyces pombe (strain 972 / ATCC 24843) (Fission yeast).